The following is a 465-amino-acid chain: Cerebellar degeneration-related protein 2-like (465 aa).

3 coiled-coil regions span residues 31–64 (AAEL…HEIE), 91–142 (ARDL…LEQL), and 188–266 (LEQE…YLLA). Residues 282–315 (APEADDPQPGSGDDSNAQDGVSSPAASPSHAVRK) form a disordered region. 3 positions are modified to phosphoserine: S308, S318, and S344. Residues 350 to 377 (MSILREVDEQYHALLEKYEELLSKCRQH) adopt a coiled-coil conformation. The segment at 382-421 (RHAGVQTSRPISRDSSWRDLLGGEESPGEGKAGEKSLSQH) is disordered. S407 carries the post-translational modification Phosphoserine.

This sequence belongs to the CDR2 family.

This chain is Cerebellar degeneration-related protein 2-like (Cdr2l), found in Mus musculus (Mouse).